The chain runs to 473 residues: MRHYYSVDTIRAAEAPLLASLPDGALMRRAAFGLATEIGRELTARTGGVVGRRVCAVVGSGDNGGDALWAATFLRRRGAAADAVLLNPDRTHRKALAAFTKSGGRLVESVSAATDLVIDGVVGISGSGPLRPAAAQVFAAVQAAAIPVVAVDIPSGIDVATGAITGPAVHAALTVTFGGLKPVHALADCGRVVLVDIGLDLAHTDVLGFEATDVAARWPVPGPRDDKYTQGVTGVLAGSSTYPGAAVLCTGAAVAATSGMVRYAGTAHAEVLAHWPEVIASPTPAAAGRVQAWVVGPGLGTDEAGAAALWFALDTDLPVLVDADGLTMLADHPDLVAGRNAPTVLTPHAGEFARLAGAPPGDDRVGACRQLADALGATVLLKGNVTVIADPGGPVYLNPAGQSWAATAGSGDVLSGMIGALLASGLPSGEAAAAAAFVHARASAAAAADPGPGDAPTSASRISGHIRAALAAL.

Residues 1–211 (MRHYYSVDTI…AHTDVLGFEA (211 aa)) form an NAD(P)H-hydrate epimerase region. Positions 10-205 (IRAAEAPLLA…DIGLDLAHTD (196 aa)) constitute a YjeF N-terminal domain. Residues 62–66 (DNGGD) are NADPHX 1; for epimerase activity. Positions 63 and 119 each coordinate K(+). Residues 123 to 129 (GISGSGP) form an NADPHX 1; for epimerase activity region. Asp152 is a (6S)-NADPHX binding site. A K(+)-binding site is contributed by Ser155. The 264-residue stretch at 210-473 (EATDVAARWP…GHIRAALAAL (264 aa)) folds into the YjeF C-terminal domain. The ADP-dependent (S)-NAD(P)H-hydrate dehydratase stretch occupies residues 211–473 (ATDVAARWPV…GHIRAALAAL (263 aa)). Position 298 (Gly298) interacts with (6S)-NADPHX. The segment at 348–354 (HAGEFAR) is NADPHX 2; for dehydratase activity. Residues 382–386 (KGNVT) and 402–411 (QSWAATAGSG) contribute to the ADP site. Residue Asp412 coordinates (6S)-NADPHX.

It in the N-terminal section; belongs to the NnrE/AIBP family. This sequence in the C-terminal section; belongs to the NnrD/CARKD family. The cofactor is K(+).

The enzyme catalyses (6S)-NADHX + ADP = AMP + phosphate + NADH + H(+). It catalyses the reaction (6S)-NADPHX + ADP = AMP + phosphate + NADPH + H(+). It carries out the reaction (6R)-NADHX = (6S)-NADHX. The catalysed reaction is (6R)-NADPHX = (6S)-NADPHX. Bifunctional enzyme that catalyzes the epimerization of the S- and R-forms of NAD(P)HX and the dehydration of the S-form of NAD(P)HX at the expense of ADP, which is converted to AMP. This allows the repair of both epimers of NAD(P)HX, a damaged form of NAD(P)H that is a result of enzymatic or heat-dependent hydration. This chain is Bifunctional NAD(P)H-hydrate repair enzyme Nnr (nnr), found in Mycobacterium tuberculosis (strain CDC 1551 / Oshkosh).